Reading from the N-terminus, the 432-residue chain is Glutamate-1-semialdehyde 2,1-aminomutase 1 (432 aa).

Position 272 is an N6-(pyridoxal phosphate)lysine (lysine 272).

Belongs to the class-III pyridoxal-phosphate-dependent aminotransferase family. HemL subfamily. In terms of assembly, homodimer. Requires pyridoxal 5'-phosphate as cofactor.

It is found in the cytoplasm. It catalyses the reaction (S)-4-amino-5-oxopentanoate = 5-aminolevulinate. It functions in the pathway porphyrin-containing compound metabolism; protoporphyrin-IX biosynthesis; 5-aminolevulinate from L-glutamyl-tRNA(Glu): step 2/2. The sequence is that of Glutamate-1-semialdehyde 2,1-aminomutase 1 from Exiguobacterium sibiricum (strain DSM 17290 / CCUG 55495 / CIP 109462 / JCM 13490 / 255-15).